We begin with the raw amino-acid sequence, 213 residues long: Phosphoheptose isomerase (213 aa).

Residues 50-208 enclose the SIS domain; that stretch reads MAETFEGGGR…IDLVERMLGY (159 aa). Substrate is bound at residue 65 to 67; the sequence is NGG. Residues His-74 and Glu-78 each coordinate Zn(2+). Substrate-binding positions include Glu-78, 109–110, 135–137, Ser-140, and Gln-188; these read ND and STS. Gln-188 and His-196 together coordinate Zn(2+).

It belongs to the SIS family. GmhA subfamily. Requires Zn(2+) as cofactor.

Its subcellular location is the cytoplasm. The enzyme catalyses 2 D-sedoheptulose 7-phosphate = D-glycero-alpha-D-manno-heptose 7-phosphate + D-glycero-beta-D-manno-heptose 7-phosphate. It functions in the pathway carbohydrate biosynthesis; D-glycero-D-manno-heptose 7-phosphate biosynthesis; D-glycero-alpha-D-manno-heptose 7-phosphate and D-glycero-beta-D-manno-heptose 7-phosphate from sedoheptulose 7-phosphate: step 1/1. In terms of biological role, catalyzes the isomerization of sedoheptulose 7-phosphate in D-glycero-D-manno-heptose 7-phosphate. In Chlorobium phaeovibrioides (strain DSM 265 / 1930) (Prosthecochloris vibrioformis (strain DSM 265)), this protein is Phosphoheptose isomerase.